Consider the following 243-residue polypeptide: Ribonuclease 3 (243 aa).

The RNase III domain occupies 10–146 (VNRFRKRFDT…FIGALYLDQG (137 aa)). Residue E59 participates in Mg(2+) binding. Residue D63 is part of the active site. D132 and E135 together coordinate Mg(2+). E135 is a catalytic residue. The region spanning 172 to 241 (DFKTQFQEYV…AESAYKQLKQ (70 aa)) is the DRBM domain. Residues 219-231 (GKGKTKKESEQRA) show a composition bias toward basic and acidic residues. The interval 219 to 243 (GKGKTKKESEQRAAESAYKQLKQIK) is disordered.

This sequence belongs to the ribonuclease III family. As to quaternary structure, homodimer. Requires Mg(2+) as cofactor.

The protein resides in the cytoplasm. The enzyme catalyses Endonucleolytic cleavage to 5'-phosphomonoester.. Functionally, digests double-stranded RNA. Involved in the processing of primary rRNA transcript to yield the immediate precursors to the large and small rRNAs (23S and 16S). Processes some mRNAs, and tRNAs when they are encoded in the rRNA operon. Processes pre-crRNA and tracrRNA of type II CRISPR loci if present in the organism. The polypeptide is Ribonuclease 3 (Staphylococcus aureus (strain USA300)).